Here is a 590-residue protein sequence, read N- to C-terminus: Probable metalloendopeptidase G1-type (590 aa).

H41 is a Zn(2+) binding site. Residue E44 is part of the active site. H45 is a binding site for Zn(2+).

This sequence belongs to the peptidase M44 family. Zn(2+) serves as cofactor.

Functionally, seems to be involved in viral proteins maturation by cleavage at Ala-Gly-|-Xaa motifs. The protein is Probable metalloendopeptidase G1-type of Homo sapiens (Human).